The sequence spans 463 residues: Phosphoglucosamine mutase (463 aa).

Ser108 functions as the Phosphoserine intermediate in the catalytic mechanism. Mg(2+)-binding residues include Ser108, Asp247, Asp249, and Asp251. Ser108 carries the post-translational modification Phosphoserine.

It belongs to the phosphohexose mutase family. Mg(2+) is required as a cofactor. In terms of processing, activated by phosphorylation.

It carries out the reaction alpha-D-glucosamine 1-phosphate = D-glucosamine 6-phosphate. Its function is as follows. Catalyzes the conversion of glucosamine-6-phosphate to glucosamine-1-phosphate. The protein is Phosphoglucosamine mutase of Nitrosospira multiformis (strain ATCC 25196 / NCIMB 11849 / C 71).